The following is a 508-amino-acid chain: Maturase K (508 aa).

It belongs to the intron maturase 2 family. MatK subfamily.

The protein resides in the plastid. It is found in the chloroplast. In terms of biological role, usually encoded in the trnK tRNA gene intron. Probably assists in splicing its own and other chloroplast group II introns. The sequence is that of Maturase K from Coronilla varia (Crown vetch).